We begin with the raw amino-acid sequence, 962 residues long: MPPSMIRVLYATDGCAITYSLMLLTGQEPSGAVYVVSYAWDGAGLDEAFSLPGERAEAELLARRPGVTFCLTGHVASVRVRPVFVAAATPAVVRALCRGEPLAARDVLEAMDEAATFALHDGLIAALTMVLEQVRPRTGNAEYAPERPLRSIAVGRRGLTSLFVHHETQTLAAFRRLYGNHNTPFWYVARFGPEEKTLVLATRLHLFHPRPAYDLRALKDLLLTYNPRVDPNPSGLDPAGLLSFAALSRFCCLSGYARGPAAAHAARYVDERVRADRAEMGVLRDYISHDRGSLKLPDREFVTYVYLAHFESFNRARLREHLDAVNVTDPAAPVGRSPLGERAAAAFFRHVRAQLNIRDYVAQNVTPSVARLAPAMGAGYVEDRTYAALAADAPRGLCDAAAGLARRVTAVEERLAPHGWVRAPDEEQQQPGADGAVLRRLLELAAAPGGGRARTALGALLGLPDACPPAPVYRVELAHRRQAFAVLAGDAWGRATARRDAAPEMAAHEPAAQMYVSRHEVFNARLAVTNIVLDVDFRLARPVPAGTLEAAMRGFRRAVLDALALLFPEADGDWAAHPCYVYKSACPPGGALAAAAGSASAASSDDGLEEAPWDDDAALADFGAAPGDEDWADWDAGVPAEVYTCDDDEVGVGIGGAGGDPGASALVRAPVPADERPPCGCRAKMGFRVCTPVPSPYAVAGADTVRGLARVLQQAVLLERDFIEPMGPYLQDFTFVDTGVYAHGRSLRLPFFAKVDGGGCHGRLLPFGDAPPGFDDPRNFHFHARPAHAVTRVLHSLGGEYESFFERKAARNREAFFARRTPLADMLRGLAVDAEDRRALEAFVADVAMAPVLRHLDAHFNGRAHEYAGATAQRVVAKPDWVLFQLCGSARFSCLRARHARSPPARTFVALSVDAHDRLCISLSQQCFATKCGSNATRTIFTAEVGQSCSSAGARCTSSSSG.

The CHC2-type zinc finger occupies 894-932; it reads CLRARHARSPPARTFVALSVDAHDRLCISLSQQCFATKC.

It belongs to the herpesviridae DNA primase family. In terms of assembly, associates with the helicase and the primase-associated factor to form the helicase-primase factor.

The protein localises to the host nucleus. Essential component of the helicase/primase complex. Unwinds the DNA at the replication forks and generates single-stranded DNA for both leading and lagging strand synthesis. The primase initiates primer synthesis and thereby produces large amount of short RNA primers on the lagging strand that the polymerase elongates using dNTPs. In Sus scrofa (Pig), this protein is DNA primase (UL52).